The chain runs to 442 residues: MSKTYHFIGIKGSGMSALALMLHQMGHKVQGSDVEKYYFTQRGLEQAGITILPFSEDNITPDMELIVGNAFRENNKEVAYALRHQIPFKRYHDFLGDFMKSFISFAVAGAHGKTSTTGLLSHVLKNITDTSYLIGDGTGRGSANAQYFVFESDEYERHFMPYHPEYSIITNIDFDHPDYFTGIADVRNAFNDYAKQVKKALFVYGEDDELKKIEAPAPIYYYGFEKGNDFIAYDITRTTNGSDFKVKHQGEVIGQFHVPAYGKHNILNATAVIANLFVAGIDMALVADHLKTFSGVKRRFTEKIINDTIIIDDFAHHPTEIVATIDAARQKYPSKEIVAIFQPHTFTRTIALLEDFACALNEADSVYLAQIYGSAREVDKGEVKVEDLAAKIIKPSQVVTVENVSPLLDHDNAVYVFMGAGDIQLYEHSFEELLANLTKNNQ.

ATP is bound at residue 109–115 (GAHGKTS).

Belongs to the MurCDEF family.

It localises to the cytoplasm. It catalyses the reaction UDP-N-acetyl-alpha-D-muramate + L-alanine + ATP = UDP-N-acetyl-alpha-D-muramoyl-L-alanine + ADP + phosphate + H(+). It participates in cell wall biogenesis; peptidoglycan biosynthesis. Functionally, cell wall formation. The polypeptide is UDP-N-acetylmuramate--L-alanine ligase (Streptococcus pyogenes serotype M2 (strain MGAS10270)).